Consider the following 467-residue polypeptide: ATP synthase subunit beta (467 aa).

152-159 (GGAGVGKT) provides a ligand contact to ATP.

Belongs to the ATPase alpha/beta chains family. As to quaternary structure, F-type ATPases have 2 components, CF(1) - the catalytic core - and CF(0) - the membrane proton channel. CF(1) has five subunits: alpha(3), beta(3), gamma(1), delta(1), epsilon(1). CF(0) has three main subunits: a(1), b(2) and c(9-12). The alpha and beta chains form an alternating ring which encloses part of the gamma chain. CF(1) is attached to CF(0) by a central stalk formed by the gamma and epsilon chains, while a peripheral stalk is formed by the delta and b chains.

It localises to the cell membrane. It carries out the reaction ATP + H2O + 4 H(+)(in) = ADP + phosphate + 5 H(+)(out). Functionally, produces ATP from ADP in the presence of a proton gradient across the membrane. The catalytic sites are hosted primarily by the beta subunits. This chain is ATP synthase subunit beta, found in Caldicellulosiruptor saccharolyticus (strain ATCC 43494 / DSM 8903 / Tp8T 6331).